A 156-amino-acid chain; its full sequence is Cell division protein SepF (156 aa).

The span at 23–36 (SYEKEQTDMKKQQD) shows a compositional bias: basic and acidic residues. Positions 23–48 (SYEKEQTDMKKQQDPPEQQDVTFPKA) are disordered. Polar residues predominate over residues 37-48 (PPEQQDVTFPKA).

The protein belongs to the SepF family. Homodimer. Interacts with FtsZ.

Its subcellular location is the cytoplasm. In terms of biological role, cell division protein that is part of the divisome complex and is recruited early to the Z-ring. Probably stimulates Z-ring formation, perhaps through the cross-linking of FtsZ protofilaments. Its function overlaps with FtsA. This chain is Cell division protein SepF, found in Bacillus cereus (strain ATCC 10987 / NRS 248).